The sequence spans 391 residues: Protein-glutamate methylesterase/protein-glutamine glutaminase of group 2 operon (391 aa).

The Response regulatory domain maps to 20–138; sequence RVMIVDDSVV…EPQAADIFKH (119 aa). The residue at position 71 (aspartate 71) is a 4-aspartylphosphate. Positions 196–383 constitute a CheB-type methylesterase domain; sequence PTAPRVLLIG…PLNQIGPKVV (188 aa). Catalysis depends on residues serine 207, histidine 235, and aspartate 331.

The protein belongs to the CheB family. Phosphorylated by CheA. Phosphorylation of the N-terminal regulatory domain activates the methylesterase activity.

The protein localises to the cytoplasm. It carries out the reaction [protein]-L-glutamate 5-O-methyl ester + H2O = L-glutamyl-[protein] + methanol + H(+). The enzyme catalyses L-glutaminyl-[protein] + H2O = L-glutamyl-[protein] + NH4(+). In terms of biological role, involved in chemotaxis. Part of a chemotaxis signal transduction system that modulates chemotaxis in response to various stimuli. Catalyzes the demethylation of specific methylglutamate residues introduced into the chemoreceptors (methyl-accepting chemotaxis proteins or MCP) by CheR. Also mediates the irreversible deamidation of specific glutamine residues to glutamic acid. The protein is Protein-glutamate methylesterase/protein-glutamine glutaminase of group 2 operon of Rhodopseudomonas palustris (strain ATCC BAA-98 / CGA009).